The primary structure comprises 412 residues: ATP phosphoribosyltransferase regulatory subunit (412 aa).

The protein belongs to the class-II aminoacyl-tRNA synthetase family. HisZ subfamily. As to quaternary structure, heteromultimer composed of HisG and HisZ subunits.

It localises to the cytoplasm. The protein operates within amino-acid biosynthesis; L-histidine biosynthesis; L-histidine from 5-phospho-alpha-D-ribose 1-diphosphate: step 1/9. Required for the first step of histidine biosynthesis. May allow the feedback regulation of ATP phosphoribosyltransferase activity by histidine. This Dehalococcoides mccartyi (strain ATCC BAA-2266 / KCTC 15142 / 195) (Dehalococcoides ethenogenes (strain 195)) protein is ATP phosphoribosyltransferase regulatory subunit.